The chain runs to 277 residues: Orotidine 5'-phosphate decarboxylase (277 aa).

Residues Asp-40, 62 to 64 (KTH), 93 to 102 (DRKFIDIGNT), Tyr-229, and Arg-247 contribute to the substrate site. Catalysis depends on Lys-95, which acts as the Proton donor.

This sequence belongs to the OMP decarboxylase family.

The enzyme catalyses orotidine 5'-phosphate + H(+) = UMP + CO2. It functions in the pathway pyrimidine metabolism; UMP biosynthesis via de novo pathway; UMP from orotate: step 2/2. The protein is Orotidine 5'-phosphate decarboxylase (pyrG) of Aspergillus awamori (Black koji mold).